The primary structure comprises 210 residues: Large ribosomal subunit protein uL4 (210 aa).

Positions 44–54 (QRQGTASTLTR) are enriched in polar residues. A disordered region spans residues 44–96 (QRQGTASTLTRSEVRGGGRKPYKQKGTGRARQGSIRTPLRPGGGVIFGPKPRS). Residues 60-71 (GGRKPYKQKGTG) are compositionally biased toward basic residues.

It belongs to the universal ribosomal protein uL4 family. Part of the 50S ribosomal subunit.

One of the primary rRNA binding proteins, this protein initially binds near the 5'-end of the 23S rRNA. It is important during the early stages of 50S assembly. It makes multiple contacts with different domains of the 23S rRNA in the assembled 50S subunit and ribosome. In terms of biological role, forms part of the polypeptide exit tunnel. This Prochlorococcus marinus (strain MIT 9515) protein is Large ribosomal subunit protein uL4.